A 253-amino-acid chain; its full sequence is 5'/3'-nucleotidase SurE (253 aa).

A divalent metal cation contacts are provided by Asp-8, Asp-9, Ser-39, and Asn-92.

It belongs to the SurE nucleotidase family. A divalent metal cation is required as a cofactor.

It localises to the cytoplasm. It catalyses the reaction a ribonucleoside 5'-phosphate + H2O = a ribonucleoside + phosphate. The enzyme catalyses a ribonucleoside 3'-phosphate + H2O = a ribonucleoside + phosphate. The catalysed reaction is [phosphate](n) + H2O = [phosphate](n-1) + phosphate + H(+). Its function is as follows. Nucleotidase with a broad substrate specificity as it can dephosphorylate various ribo- and deoxyribonucleoside 5'-monophosphates and ribonucleoside 3'-monophosphates with highest affinity to 3'-AMP. Also hydrolyzes polyphosphate (exopolyphosphatase activity) with the preference for short-chain-length substrates (P20-25). Might be involved in the regulation of dNTP and NTP pools, and in the turnover of 3'-mononucleotides produced by numerous intracellular RNases (T1, T2, and F) during the degradation of various RNAs. This is 5'/3'-nucleotidase SurE from Cronobacter sakazakii (strain ATCC BAA-894) (Enterobacter sakazakii).